Here is a 367-residue protein sequence, read N- to C-terminus: Chorismate synthase (367 aa).

The interval 41 to 60 (FTHDLQRRASGKSRHTSARR) is disordered. NADP(+) contacts are provided by R48 and R54. Residues 125-127 (RSS), 238-239 (NA), G278, 293-297 (KPTSS), and R319 contribute to the FMN site.

Belongs to the chorismate synthase family. In terms of assembly, homotetramer. FMNH2 serves as cofactor.

It carries out the reaction 5-O-(1-carboxyvinyl)-3-phosphoshikimate = chorismate + phosphate. It functions in the pathway metabolic intermediate biosynthesis; chorismate biosynthesis; chorismate from D-erythrose 4-phosphate and phosphoenolpyruvate: step 7/7. Catalyzes the anti-1,4-elimination of the C-3 phosphate and the C-6 proR hydrogen from 5-enolpyruvylshikimate-3-phosphate (EPSP) to yield chorismate, which is the branch point compound that serves as the starting substrate for the three terminal pathways of aromatic amino acid biosynthesis. This reaction introduces a second double bond into the aromatic ring system. The chain is Chorismate synthase from Xanthomonas axonopodis pv. citri (strain 306).